Here is a 189-residue protein sequence, read N- to C-terminus: Small ribosomal subunit protein uS5 (189 aa).

The S5 DRBM domain maps to 23–86; it reads FIDKLVHINR…ESAKREMIYV (64 aa).

This sequence belongs to the universal ribosomal protein uS5 family. In terms of assembly, part of the 30S ribosomal subunit. Contacts proteins S4 and S8.

In terms of biological role, with S4 and S12 plays an important role in translational accuracy. Located at the back of the 30S subunit body where it stabilizes the conformation of the head with respect to the body. The sequence is that of Small ribosomal subunit protein uS5 from Bartonella bacilliformis (strain ATCC 35685 / KC583 / Herrer 020/F12,63).